The chain runs to 136 residues: Large ribosomal subunit protein uL16 (136 aa).

The protein belongs to the universal ribosomal protein uL16 family. As to quaternary structure, part of the 50S ribosomal subunit.

Binds 23S rRNA and is also seen to make contacts with the A and possibly P site tRNAs. In Erwinia tasmaniensis (strain DSM 17950 / CFBP 7177 / CIP 109463 / NCPPB 4357 / Et1/99), this protein is Large ribosomal subunit protein uL16.